The following is a 202-amino-acid chain: Hypoxanthine-guanine phosphoribosyltransferase (202 aa).

The diphosphate site is built by Lys-66 and Gly-67. 2 residues coordinate Mg(2+): Glu-122 and Asp-123. The Proton acceptor role is filled by Asp-126. GMP-binding positions include Lys-154, 175 to 176, and Asp-182; that span reads FV. Arg-188 provides a ligand contact to diphosphate.

The protein belongs to the purine/pyrimidine phosphoribosyltransferase family. As to quaternary structure, homodimer and homotetramer in equilibrium. The presence or absence of divalent metal ions, as well as phosphate, can affect the oligomerization state of the enzyme. Likely functions as a tetramer (rather than a dimer) in its biological environment, which is the most active form. The dimeric structure is also active though ~50% of that of the tetramer. It depends on Mg(2+) as a cofactor.

Its subcellular location is the cytoplasm. It carries out the reaction IMP + diphosphate = hypoxanthine + 5-phospho-alpha-D-ribose 1-diphosphate. The catalysed reaction is GMP + diphosphate = guanine + 5-phospho-alpha-D-ribose 1-diphosphate. Its pathway is purine metabolism; IMP biosynthesis via salvage pathway; IMP from hypoxanthine: step 1/1. It functions in the pathway purine metabolism; GMP biosynthesis via salvage pathway; GMP from guanine: step 1/1. Its activity is regulated as follows. Competitively inhibited by acyclic nucleoside phosphonates (ANPs) with Ki values as low as 0.69 uM. Prodrugs of these compounds arrest the growth of a virulent strain of M.tuberculosis with MIC50 values as low as 4.5 uM and possess low cytotoxicity in mammalian cells. Inhibited by pyrrolidine nucleoside bisphosphonates, which are also able to arrest the growth of virulent M.tuberculosis not only in its replicating phase but also in its latent phase, and to arrest the growth of M.tuberculosis in infected macrophages while having low cytotoxicity in mammalian cells. Its function is as follows. Purine salvage pathway enzyme that catalyzes the transfer of the ribosyl-5-phosphate group from 5-phospho-alpha-D-ribose 1-diphosphate (PRPP) to the N9 position of the 6-oxopurines hypoxanthine and guanine to form the corresponding ribonucleotides IMP (inosine 5'-monophosphate) and GMP (guanosine 5'-monophosphate), with the release of PPi. Thus, specifically recycles hypoxanthine and guanine imported from the external medium, and converts them to IMP and GMP, respectively. Cannot use xanthine as substrate. The polypeptide is Hypoxanthine-guanine phosphoribosyltransferase (Mycobacterium tuberculosis (strain ATCC 25618 / H37Rv)).